Reading from the N-terminus, the 533-residue chain is MAVLSRMRLRWALLDTRVMGHGLCPQGARAKAAIPAALRDHESTEGPGTGQDRPRLRSLAELPGPGTLRFLFQLFLRGYVLHLHELQALNKAKYGPMWTTTFGTRTNVNLASAPLLEQVMRQEGKYPIRDSMEQWKEHRDHKGLSYGIFITQGQQWYHLRHSLNQRMLKPAEAALYTDALNEVISDFIARLDQVRTESASGDQVPDVAHLLYHLALEAICYILFEKRVGCLEPSIPEDTATFIRSVGLMFKNSVYVTFLPKWSRPLLPFWKRYMNNWDNIFSFGEKMIHQKVQEIEAQLQAAGPDGVQVSGYLHFLLTKELLSPQETVGTFPELILAGVDTTSNTLTWALYHLSKNPEIQEALHKEVTGVVPFGKVPQNKDFAHMPLLKAVIKETLRLYPVVPTNSRIITEKETEINGFLFPKNTQFVLCHYVVSRDPSVFPEPESFQPHRWLRKREDDNSGIQHPFGSVPFGYGVRSCLGRRIAELEMQLLLSRLIQKYEVVLSPGMGEVKSVSRIVLVPSKKVSLRFLQRQ.

The transit peptide at 1–32 (MAVLSRMRLRWALLDTRVMGHGLCPQGARAKA) directs the protein to the mitochondrion. The tract at residues 38–58 (LRDHESTEGPGTGQDRPRLRS) is disordered. An N6-acetyllysine mark is found at lysine 142 and lysine 375. The tract at residues 386-400 (PLLKAVIKETLRLYP) is sterol-binding. Residue cysteine 479 coordinates heme. Lysine 512 and lysine 523 each carry N6-acetyllysine.

The protein belongs to the cytochrome P450 family. Interacts with HSP70; this interaction is required for initial targeting to mitochondria. Heme is required as a cofactor. Expressed in liver, kidney and ovary.

It is found in the mitochondrion inner membrane. It catalyses the reaction 5beta-cholestane-3alpha,7alpha,12alpha-triol + 6 reduced [adrenodoxin] + 3 O2 + 5 H(+) = (25R)-3alpha,7alpha,12alpha-trihydroxy-5beta-cholestan-26-oate + 6 oxidized [adrenodoxin] + 4 H2O. The catalysed reaction is cholestanol + 2 reduced [adrenodoxin] + O2 + 2 H(+) = (25R)-26-hydroxycholestanol + 2 oxidized [adrenodoxin] + H2O. The enzyme catalyses (25R)-3beta-hydroxycholest-5-en-7-one-26-al + 2 reduced [adrenodoxin] + O2 + H(+) = (25R)-3beta-hydroxycholest-5-en-7-one-26-oate + 2 oxidized [adrenodoxin] + H2O. It carries out the reaction (25R)-3beta,26-dihydroxycholest-5-en-7-one + 2 reduced [adrenodoxin] + O2 + 2 H(+) = (25R)-3beta-hydroxycholest-5-en-7-one-26-al + 2 oxidized [adrenodoxin] + 2 H2O. It catalyses the reaction 7-oxocholesterol + 2 reduced [adrenodoxin] + O2 + 2 H(+) = (25R)-3beta,26-dihydroxycholest-5-en-7-one + 2 oxidized [adrenodoxin] + H2O. The catalysed reaction is calciol + 2 reduced [adrenodoxin] + O2 + 2 H(+) = calcidiol + 2 oxidized [adrenodoxin] + H2O. The enzyme catalyses (25R)-5beta-cholestane-3alpha,7alpha,12alpha,26-tetrol + 2 reduced [adrenodoxin] + O2 + 2 H(+) = (25R)-3alpha,7alpha,12alpha-trihydroxy-5beta-cholestan-26-al + 2 oxidized [adrenodoxin] + 2 H2O. It carries out the reaction 2 reduced [adrenodoxin] + cholesterol + O2 + 2 H(+) = (25R)-cholest-5-ene-3beta,26-diol + 2 oxidized [adrenodoxin] + H2O. It catalyses the reaction (25R)-3beta,4beta-dihydroxycholest-5-en-26-al + 2 reduced [adrenodoxin] + O2 + H(+) = (25R)-3beta,4beta-dihydroxycholest-5-en-26-oate + 2 oxidized [adrenodoxin] + H2O. The catalysed reaction is (25R)-4beta,26-dihydroxycholesterol + 2 reduced [adrenodoxin] + O2 + 2 H(+) = (25R)-3beta,4beta-dihydroxycholest-5-en-26-al + 2 oxidized [adrenodoxin] + 2 H2O. The enzyme catalyses 4beta-hydroxycholesterol + 2 reduced [adrenodoxin] + O2 + 2 H(+) = (25R)-4beta,26-dihydroxycholesterol + 2 oxidized [adrenodoxin] + H2O. It carries out the reaction (25R)-3beta-hydroxy-5-cholesten-26-al + 2 reduced [adrenodoxin] + O2 + H(+) = (25R)-3beta-hydroxy-5-cholestenoate + 2 oxidized [adrenodoxin] + H2O. It catalyses the reaction (25R)-cholest-5-ene-3beta,26-diol + 2 reduced [adrenodoxin] + O2 + 2 H(+) = (25R)-3beta-hydroxy-5-cholesten-26-al + 2 oxidized [adrenodoxin] + 2 H2O. The catalysed reaction is (25R)-3alpha,7alpha,12alpha-trihydroxy-5beta-cholestan-26-al + 2 reduced [adrenodoxin] + O2 + H(+) = (25R)-3alpha,7alpha,12alpha-trihydroxy-5beta-cholestan-26-oate + 2 oxidized [adrenodoxin] + H2O. The enzyme catalyses 5beta-cholestane-3alpha,7alpha,12alpha-triol + 2 reduced [adrenodoxin] + O2 + 2 H(+) = (25R)-5beta-cholestane-3alpha,7alpha,12alpha,26-tetrol + 2 oxidized [adrenodoxin] + H2O. The protein operates within hormone biosynthesis; cholecalciferol biosynthesis. It participates in steroid metabolism; cholesterol degradation. It functions in the pathway lipid metabolism; bile acid biosynthesis. In terms of biological role, cytochrome P450 monooxygenase that catalyzes regio- and stereospecific hydroxylation of cholesterol and its derivatives. Hydroxylates (with R stereochemistry) the terminal methyl group of cholesterol side-chain in a three step reaction to yield at first a C26 alcohol, then a C26 aldehyde and finally a C26 acid. Regulates cholesterol homeostasis by catalyzing the conversion of excess cholesterol to bile acids via both the 'neutral' (classic) and the 'acid' (alternative) pathways. May also regulate cholesterol homeostasis via generation of active oxysterols, which act as ligands for NR1H2 and NR1H3 nuclear receptors, modulating the transcription of genes involved in lipid metabolism. Plays a role in cholestanol metabolism in the cerebellum. Similarly to cholesterol, hydroxylates cholestanol and may facilitate sterol diffusion through the blood-brain barrier to the systemic circulation for further degradation. Also hydroxylates retinal 7-ketocholesterol, a noxious oxysterol with pro-inflammatory and pro-apoptotic effects, and may play a role in its elimination from the retinal pigment epithelium. May play a redundant role in vitamin D biosynthesis. Catalyzes 25-hydroxylation of vitamin D3 that is required for its conversion to a functionally active form. The chain is Sterol 26-hydroxylase, mitochondrial (Cyp27a1) from Rattus norvegicus (Rat).